A 474-amino-acid chain; its full sequence is MKKYDRGWASLETGAALLIVMLLIAWGAGIWQDYIQTKGWQTEARLVSNWTSAARSYIGKNYTTLQGSSTTTTPAVITTTMLKNTGFLSSGFTETNSEGQRLQAYVVRNAQNPELLQAMVVSSGGTPYPVKALIQMAKDITTGLGGYIQDGKTATGALRSWSVALSNYGAKSGNGHIAVLLSTDELSGAAEDTDRLYRFQVNGRPDLNKMHTAIDMGSNNLNNVGAVNAQTGNFSGNVNGVNGTFSGQVKGNSGNFDVNVTAGGDIRSNNGWLITRNSKGWLNETHGGGFYMSDGSWVRSVNNKGIYTGGQVKGGTVRADGRLYTGEYLQLERTAVAGASCSPNGLVGRDNTGAILSCQSGTWKTSGSLNGSYTNLGSHRGSFSGRNSGGSTLFIYASGGNGGSAGGACANTSRLQGYVGGTLISVNASNNPAYGKTAFISFAVPAGTSYQITSYPTENTSCGAGVFSVFGYQT.

A constant region region spans residues 1–361 (MKKYDRGWAS…TGAILSCQSG (361 aa)). The segment at 362 to 474 (TWKTSGSLNG…GVFSVFGYQT (113 aa)) is variable region.

This chain is Shufflon protein A, found in Escherichia coli.